Here is a 208-residue protein sequence, read N- to C-terminus: MTKGILGKKVGMTQIFTEAGEFIPVTVIEATPNVVLQVKTVETDGYEAVQVGFDDKREVLSNKPAKGHVAKANTAPKRFIREFKNIEGLEVGSEITVDIFEAGDIVDVTGTSKGKGFQGVIKRHGQSRGPMAHGSRYHRRPGSMGPVAPNRVFKNKHLAGRMGGNRVTIQNLEIVQVIPEKNVILIKGNVPGAKKSLITIKSAVKTAK.

Residues 124–146 are disordered; the sequence is HGQSRGPMAHGSRYHRRPGSMGP.

The protein belongs to the universal ribosomal protein uL3 family. In terms of assembly, part of the 50S ribosomal subunit. Forms a cluster with proteins L14 and L19.

In terms of biological role, one of the primary rRNA binding proteins, it binds directly near the 3'-end of the 23S rRNA, where it nucleates assembly of the 50S subunit. The chain is Large ribosomal subunit protein uL3 from Streptococcus thermophilus (strain ATCC BAA-491 / LMD-9).